The following is a 590-amino-acid chain: Myo-inositol transporter 3 (590 aa).

The span at 1-26 (MRTTHIEDRDNNSLENKHTDHIEGVE) shows a compositional bias: basic and acidic residues. Positions 1 to 40 (MRTTHIEDRDNNSLENKHTDHIEGVENGKGTQEPPSPSGF) are disordered. The Cytoplasmic portion of the chain corresponds to 1 to 57 (MRTTHIEDRDNNSLENKHTDHIEGVENGKGTQEPPSPSGFGGHLIDENLVHVEGEDK). Residues 58–78 (VTWYLCFLISASAIAGFLFGY) traverse the membrane as a helical segment. Residues 79–105 (DTGVVGVALPLVGTDLGGNELNSSQQE) lie on the Extracellular side of the membrane. A glycan (N-linked (GlcNAc...) asparagine) is linked at Asn-100. Residues 106 to 126 (IITAGTTIGAIFGSAILGGWG) traverse the membrane as a helical segment. Residues 127-132 (DHLGRK) lie on the Cytoplasmic side of the membrane. Residues 133–153 (MAILISDVFFTVGAVIIASSY) form a helical membrane-spanning segment. Residues 154–157 (SVPQ) are Extracellular-facing. Residues 158–178 (IIVGRIVLGVGVGGAAVIAPL) traverse the membrane as a helical segment. Residues 179 to 192 (FITETAPTAVRGRC) are Cytoplasmic-facing. A helical transmembrane segment spans residues 193–213 (IGVNAFFIPFGQLVADSIGAG). The Extracellular segment spans residues 214–222 (VQNMHGGWR). A helical membrane pass occupies residues 223 to 243 (LLFALGAVPSLIQLLLFHYLP). Residues 244–325 (ESPRILIVKG…AVSVLQAAGQ (82 aa)) lie on the Cytoplasmic side of the membrane. Residues 326–346 (LCGFNTLLYYAGTLFGLLGLS) form a helical membrane-spanning segment. Residues 347–349 (NPA) lie on the Extracellular side of the membrane. A helical membrane pass occupies residues 350 to 370 (LGGLIPAGTNAVFVLIGMSTV). Over 371–376 (DKIGRR) the chain is Cytoplasmic. A helical membrane pass occupies residues 377–397 (GLLLVGVPVLLLGLVWNIIGF). At 398–420 (YYMCKPTGGFLDTSYSYDTTNVG) the chain is on the extracellular side. Residues 421–441 (IVIGGIVFYVAGFGLTYSHLV) form a helical membrane-spanning segment. Topologically, residues 442-455 (WYQAEYLALEVRSM) are cytoplasmic. A helical membrane pass occupies residues 456-476 (GSGVATTVCWIANLVVSVSYL). Residues 477-485 (SELETMTPS) lie on the Extracellular side of the membrane. Residues 486–506 (GTYGFYLGLSVIAFVFVVFCF) form a helical membrane-spanning segment. Over 507-590 (PETKQLSIDE…GGKRKPQVLV (84 aa)) the chain is Cytoplasmic.

Belongs to the major facilitator superfamily. Sugar transporter (TC 2.A.1.1) family.

The protein localises to the cell membrane. It carries out the reaction myo-inositol(out) + H(+)(out) = myo-inositol(in) + H(+)(in). Its function is as follows. Transporter for myo-inositol. This chain is Myo-inositol transporter 3, found in Cryptococcus neoformans var. grubii serotype A (strain H99 / ATCC 208821 / CBS 10515 / FGSC 9487) (Filobasidiella neoformans var. grubii).